The chain runs to 463 residues: Protein DML1 (463 aa).

It belongs to the misato family.

It localises to the mitochondrion. Involved in the partitioning of the mitochondrial organelle and mitochondrial DNA (mtDNA) inheritance. The sequence is that of Protein DML1 (DML1) from Debaryomyces hansenii (strain ATCC 36239 / CBS 767 / BCRC 21394 / JCM 1990 / NBRC 0083 / IGC 2968) (Yeast).